The following is a 661-amino-acid chain: Threonine--tRNA ligase (661 aa).

The region spanning Met-1–Arg-64 is the TGS domain. The segment at Asp-245 to Pro-546 is catalytic. Residues Cys-341, His-392, and His-523 each contribute to the Zn(2+) site.

Belongs to the class-II aminoacyl-tRNA synthetase family. Homodimer. It depends on Zn(2+) as a cofactor.

It is found in the cytoplasm. It carries out the reaction tRNA(Thr) + L-threonine + ATP = L-threonyl-tRNA(Thr) + AMP + diphosphate + H(+). Catalyzes the attachment of threonine to tRNA(Thr) in a two-step reaction: L-threonine is first activated by ATP to form Thr-AMP and then transferred to the acceptor end of tRNA(Thr). Also edits incorrectly charged L-seryl-tRNA(Thr). The chain is Threonine--tRNA ligase from Rhizobium johnstonii (strain DSM 114642 / LMG 32736 / 3841) (Rhizobium leguminosarum bv. viciae).